We begin with the raw amino-acid sequence, 136 residues long: Pterin-4-alpha-carbinolamine dehydratase 2 (136 aa).

3 positions are modified to N6-acetyllysine; alternate: Lys120, Lys124, and Lys131. An N6-succinyllysine; alternate mark is found at Lys120, Lys124, and Lys131.

The protein belongs to the pterin-4-alpha-carbinolamine dehydratase family. Homotetramer. Interacts with DYRK1B.

It catalyses the reaction (4aS,6R)-4a-hydroxy-L-erythro-5,6,7,8-tetrahydrobiopterin = (6R)-L-erythro-6,7-dihydrobiopterin + H2O. Functionally, involved in tetrahydrobiopterin biosynthesis. Seems to both prevent the formation of 7-pterins and accelerate the formation of quinonoid-BH2. Regulates the dimerization of homeodomain protein HNF-1-alpha and enhances its transcriptional activity. The polypeptide is Pterin-4-alpha-carbinolamine dehydratase 2 (Pcbd2) (Mus musculus (Mouse)).